Consider the following 232-residue polypeptide: Small ribosomal subunit protein uS3 (232 aa).

Residues I39–R107 form the KH type-2 domain.

The protein belongs to the universal ribosomal protein uS3 family. Part of the 30S ribosomal subunit. Forms a tight complex with proteins S10 and S14.

In terms of biological role, binds the lower part of the 30S subunit head. Binds mRNA in the 70S ribosome, positioning it for translation. The sequence is that of Small ribosomal subunit protein uS3 from Rhodopseudomonas palustris (strain HaA2).